The following is a 494-amino-acid chain: One cut domain family member 3 (494 aa).

Disordered stretches follow at residues 130 to 162 (AAAV…RLAA), 199 to 239 (LSPL…GDKL), and 295 to 319 (AHGP…AAAE). Pro residues-rich tracts occupy residues 148–158 (AAAPPPPPPPQ) and 214–225 (PQPPPPPPPPPL). Gly residues predominate over residues 297–313 (GPHGGGGGPGGSGGGPS). The CUT DNA-binding region spans 312–398 (PSAGAAAEEI…QRMSALRLAA (87 aa)). Residues 414-473 (PKKQRLVFTDLQRRTLIAIFKENKRPSKEMQVTISQQLGLELNTVSNFFMNARRRCMNRW) constitute a DNA-binding region (homeobox). The tract at residues 475 to 494 (EEPSTAPGGPAGATATFSKA) is disordered. Residues 476 to 494 (EPSTAPGGPAGATATFSKA) are compositionally biased toward low complexity.

It belongs to the CUT homeobox family.

Its subcellular location is the nucleus. In terms of biological role, transcriptional activator. Binds the consensus DNA sequence 5'-DHWATTGAYTWWD-3' on a variety of gene promoters such as those of HNF3B and TTR. The polypeptide is One cut domain family member 3 (ONECUT3) (Homo sapiens (Human)).